Here is a 388-residue protein sequence, read N- to C-terminus: Glucose-1-phosphate adenylyltransferase (388 aa).

Alpha-D-glucose 1-phosphate-binding positions include Y100, G165, 180 to 181 (EK), and S191.

Belongs to the bacterial/plant glucose-1-phosphate adenylyltransferase family. Homotetramer.

It carries out the reaction alpha-D-glucose 1-phosphate + ATP + H(+) = ADP-alpha-D-glucose + diphosphate. It participates in glycan biosynthesis; glycogen biosynthesis. In terms of biological role, involved in the biosynthesis of ADP-glucose, a building block required for the elongation reactions to produce glycogen. Catalyzes the reaction between ATP and alpha-D-glucose 1-phosphate (G1P) to produce pyrophosphate and ADP-Glc. The protein is Glucose-1-phosphate adenylyltransferase of Clostridium perfringens (strain SM101 / Type A).